Consider the following 60-residue polypeptide: Large ribosomal subunit protein uL30 (60 aa).

The protein belongs to the universal ribosomal protein uL30 family. Part of the 50S ribosomal subunit.

In Xanthobacter autotrophicus (strain ATCC BAA-1158 / Py2), this protein is Large ribosomal subunit protein uL30.